The primary structure comprises 294 residues: 4-hydroxy-tetrahydrodipicolinate synthase (294 aa).

Residue Thr-45 coordinates pyruvate. Tyr-133 serves as the catalytic Proton donor/acceptor. The active-site Schiff-base intermediate with substrate is Lys-161. Residue Ile-203 coordinates pyruvate.

Belongs to the DapA family. As to quaternary structure, homotetramer; dimer of dimers.

It is found in the cytoplasm. The catalysed reaction is L-aspartate 4-semialdehyde + pyruvate = (2S,4S)-4-hydroxy-2,3,4,5-tetrahydrodipicolinate + H2O + H(+). It functions in the pathway amino-acid biosynthesis; L-lysine biosynthesis via DAP pathway; (S)-tetrahydrodipicolinate from L-aspartate: step 3/4. Catalyzes the condensation of (S)-aspartate-beta-semialdehyde [(S)-ASA] and pyruvate to 4-hydroxy-tetrahydrodipicolinate (HTPA). This chain is 4-hydroxy-tetrahydrodipicolinate synthase, found in Shewanella baltica (strain OS223).